Consider the following 120-residue polypeptide: Dynein 11 kDa light chain, flagellar outer arm (120 aa).

Belongs to the dynein light chain family. As to quaternary structure, consists of at least 3 heavy chains (alpha, beta and gamma), 2 intermediate chains and 8 light chains.

It localises to the cytoplasm. Its subcellular location is the cytoskeleton. The protein resides in the flagellum axoneme. The sequence is that of Dynein 11 kDa light chain, flagellar outer arm from Chlamydomonas reinhardtii (Chlamydomonas smithii).